A 134-amino-acid chain; its full sequence is Fluoride-specific ion channel FluC 2 (134 aa).

4 helical membrane passes run 8–28 (IVAI…LNTW), 40–60 (IENI…LVIV), 69–89 (LGVG…DSVL), and 99–119 (LIYV…GYLL). Residues G75 and T78 each coordinate Na(+).

It belongs to the fluoride channel Fluc/FEX (TC 1.A.43) family.

It is found in the cell membrane. It carries out the reaction fluoride(in) = fluoride(out). Na(+) is not transported, but it plays an essential structural role and its presence is essential for fluoride channel function. Its function is as follows. Fluoride-specific ion channel. Important for reducing fluoride concentration in the cell, thus reducing its toxicity. The protein is Fluoride-specific ion channel FluC 2 of Halalkalibacterium halodurans (strain ATCC BAA-125 / DSM 18197 / FERM 7344 / JCM 9153 / C-125) (Bacillus halodurans).